Reading from the N-terminus, the 773-residue chain is 4'-phosphopantetheine phosphatase (773 aa).

An N-acetylalanine modification is found at alanine 2. The segment at 2 to 402 (AECGASGSGS…SPELGPAQRA (401 aa)) is pantothenate kinase. Acetyl-CoA-binding residues include serine 196 and serine 199. Tyrosine 320 bears the 3'-nitrotyrosine mark. Residues serine 393 and serine 404 each carry the phosphoserine modification. A 4'-phosphopantetheine phosphatase region spans residues 403 to 773 (RSGTFDLLEM…VIFKYEVPAE (371 aa)). Threonine 406 carries the post-translational modification Phosphothreonine. Aspartate 623, asparagine 624, and aspartate 659 together coordinate Mn(2+). The Subfamily II EGMGR motif signature appears at 724–728 (EGMGR).

In the N-terminal section; belongs to the type II pantothenate kinase family. This sequence in the C-terminal section; belongs to the damage-control phosphatase family. Phosphopantetheine phosphatase II subfamily. In terms of assembly, homodimer. Interacts with PKM. It depends on Mn(2+) as a cofactor. The cofactor is Ni(2+). In terms of tissue distribution, widely expressed with high expression in the muscle. Expressed in the retina and lens epithelium, mainly in ganglion cell layer, outer plexiform layer and retinal pigment layer (at protein level).

The protein localises to the cytoplasm. It catalyses the reaction (R)-4'-phosphopantetheine + H2O = (R)-pantetheine + phosphate. It carries out the reaction (R)-4'-phosphopantetheine sulfonate + H2O = (R)-pantetheine sulfonate + phosphate. The enzyme catalyses (R)-4'-phospho-S-sulfopantetheine + H2O = (R)-S-sulfopantetheine + phosphate. Its activity is regulated as follows. Activity is strongly promoted by Co(2+), Ni(2+), Mg(2+) and Mn(2+). Activity is inhibited by EDTA. Its function is as follows. Phosphatase which shows a preference for 4'-phosphopantetheine and its oxidatively damaged forms (sulfonate or S-sulfonate), providing strong indirect evidence that the phosphatase activity pre-empts damage in the coenzyme A (CoA) pathway. Hydrolyzing excess 4'-phosphopantetheine could constitute a directed overflow mechanism to prevent its oxidation to the S-sulfonate, sulfonate, or other forms. Hydrolyzing 4'-phosphopantetheine sulfonate or S-sulfonate would forestall their conversion to inactive forms of CoA and acyl carrier protein. May play a role in the physiological regulation of CoA intracellular levels. The protein is 4'-phosphopantetheine phosphatase of Homo sapiens (Human).